The sequence spans 179 residues: Inner membrane-spanning protein YciB (179 aa).

5 helical membrane passes run 22 to 42 (IYAATSALIVATAIVLIYSWV), 50 to 70 (MALITFVLVAVFGGLTLFFHN), 76 to 96 (WKVTVIYALFAGALLISQWVM), 121 to 141 (LAWALFFIACGLANIYIAFWL), and 149 to 169 (FKVFGLTALTLIFTLLSGVYI).

This sequence belongs to the YciB family.

It localises to the cell inner membrane. In terms of biological role, plays a role in cell envelope biogenesis, maintenance of cell envelope integrity and membrane homeostasis. The sequence is that of Inner membrane-spanning protein YciB from Salmonella agona (strain SL483).